The sequence spans 295 residues: Probable alpha-L-glutamate ligase (295 aa).

Residues 104-287 (HQLLAAQGID…VAAAIVQHLE (184 aa)) form the ATP-grasp domain. Residues K141, 178-179 (EF), D187, and 211-213 (RSN) contribute to the ATP site. Mg(2+) is bound by residues D248, E260, and N262. Positions 248, 260, and 262 each coordinate Mn(2+).

Belongs to the RimK family. Requires Mg(2+) as cofactor. The cofactor is Mn(2+).

The sequence is that of Probable alpha-L-glutamate ligase from Xanthomonas euvesicatoria pv. vesicatoria (strain 85-10) (Xanthomonas campestris pv. vesicatoria).